The chain runs to 293 residues: Protein orai (293 aa).

Residues 1–122 (MPRSHDPSRV…RAQLKASSRT (122 aa)) lie on the Cytoplasmic side of the membrane. The disordered stretch occupies residues 62 to 81 (STAGGGSRNGVGSKEGSVTS). The helical transmembrane segment at 123–141 (SALLAGFAMVCLVELQYDQ) threads the bilayer. Residues 142-146 (STPKP) lie on the Extracellular side of the membrane. A helical membrane pass occupies residues 147-167 (LLIVLGVVTSLLVSVHLLALM). The Cytoplasmic segment spans residues 168-198 (MSTCILPYMEATGCTQDSPHIKLKFYIDLSW). Residues 199–219 (LFSTCIGLLLFLVEIGVIFYV) traverse the membrane as a helical segment. Residues 220-230 (KFTAVGYPTAG) lie on the Extracellular side of the membrane. The helical transmembrane segment at 231-251 (YITTAMLVPVGVVFVVFSYLI) threads the bilayer. Over 252–293 (HKNRVSHSLGRFKHKVDTMKQFLDVEANLQKSTLAPSTIRDI) the chain is Cytoplasmic.

Belongs to the Orai family. Expressed in gonad sheath cells, hypodermis, intestine and spermatheca. Coexpressed with stim-1.

Its subcellular location is the membrane. Ca(2+) release-activated Ca(2+)-like (CRAC-like) channel subunit which mediates Ca(2+) influx and increase in Ca(2+)-selective current by synergy with the Ca(2+) sensor, stim-1. Required for Ca(2+) and IP3-dependent contractile activity of sheath cells and the spermatheca. Affects brood size and somatic cell function. The chain is Protein orai (orai-1) from Caenorhabditis elegans.